We begin with the raw amino-acid sequence, 363 residues long: Type-2 angiotensin II receptor (363 aa).

At 1 to 45 the chain is on the extracellular side; the sequence is MKDNFSFAATSRNITSSLPFDNLNATGTNESAFNCSHKPADKHLE. 5 N-linked (GlcNAc...) asparagine glycosylation sites follow: Asn4, Asn13, Asn24, Asn29, and Asn34. Intrachain disulfides connect Cys35–Cys290 and Cys117–Cys195. A helical transmembrane segment spans residues 46-70; that stretch reads AIPVLYYMIFVIGFAVNIVVVSLFC. Residues 71–80 are Cytoplasmic-facing; sequence CQKGPKKVSS. A helical membrane pass occupies residues 81–104; the sequence is IYIFNLAVADLLLLATLPLWATYY. Positions 103 and 104 each coordinate angiotensin II. Over 105-114 the chain is Extracellular; that stretch reads SYRYDWLFGP. The helical transmembrane segment at 115–140 threads the bilayer; sequence VMCKVFGSFLTLNMFASIFFITCMSV. Residues 141–159 are Cytoplasmic-facing; it reads DRYQSVIYPFLSQRRNPWQ. Residues 160 to 181 traverse the membrane as a helical segment; sequence ASYVVPLVWCMACLSSLPTFYF. Angiotensin II-binding residues include Arg182, Tyr204, and Lys215. Residues 182–206 are Extracellular-facing; sequence RDVRTIEYLGVNACIMAFPPEKYAQ. The helical transmembrane segment at 207-232 threads the bilayer; sequence WSAGIALMKNILGFIIPLIFIATCYF. Over 233–257 the chain is Cytoplasmic; it reads GIRKHLLKTNSYGKNRITRDQVLKM. A helical membrane pass occupies residues 258–281; that stretch reads AAAVVLAFIICWLPFHVLTFLDAL. Asp279 lines the angiotensin II pocket. Residues 282–294 lie on the Extracellular side of the membrane; that stretch reads TWMGIINSCEVIA. The chain crosses the membrane as a helical span at residues 295 to 320; that stretch reads VIDLALPFAILLGFTNSCVNPFLYCF. Asp297 is a binding site for angiotensin II. At 321 to 363 the chain is on the cytoplasmic side; it reads VGNRFQQKLRSVFRVPITWLQGKRETMSCRKSSSLREMDTFVS. Positions 324–333 are helix VIII; the sequence is RFQQKLRSVF. Ser354 carries the phosphoserine; by PKC modification.

Belongs to the G-protein coupled receptor 1 family. In terms of assembly, interacts with MTUS1. As to expression, abundant expression in fetal tissues, immature brain, skin wound and atretic ovarian follicles.

The protein resides in the cell membrane. Functionally, receptor for angiotensin II, a vasoconstricting peptide. Signals primarily via a non-canonical G-protein- and beta-arrestin independent pathways. Cooperates with MTUS1 to inhibit ERK2 activation and cell proliferation. The sequence is that of Type-2 angiotensin II receptor from Rattus norvegicus (Rat).